The following is a 49-amino-acid chain: Large ribosomal subunit protein bL33A (49 aa).

The protein belongs to the bacterial ribosomal protein bL33 family.

This chain is Large ribosomal subunit protein bL33A, found in Staphylococcus aureus (strain Mu3 / ATCC 700698).